The chain runs to 463 residues: Glutamate--tRNA ligase 1 (463 aa).

The 'HIGH' region motif lies at 10–20 (PSPTGYLHIGG). The short motif at 238-242 (KLSKR) is the 'KMSKS' region element. Lys-241 lines the ATP pocket.

Belongs to the class-I aminoacyl-tRNA synthetase family. Glutamate--tRNA ligase type 1 subfamily. As to quaternary structure, monomer.

The protein resides in the cytoplasm. It catalyses the reaction tRNA(Glu) + L-glutamate + ATP = L-glutamyl-tRNA(Glu) + AMP + diphosphate. Functionally, catalyzes the attachment of glutamate to tRNA(Glu) in a two-step reaction: glutamate is first activated by ATP to form Glu-AMP and then transferred to the acceptor end of tRNA(Glu). The sequence is that of Glutamate--tRNA ligase 1 from Helicobacter pylori (strain HPAG1).